A 450-amino-acid chain; its full sequence is NAD-specific glutamate dehydrogenase (450 aa).

Residues Lys-90, Gln-111, and Lys-114 each coordinate substrate. Lys-126 serves as the catalytic Proton donor. Gly-165 is a binding site for substrate. 2 residues coordinate NAD(+): Thr-210 and Asn-241. Ser-381 is a substrate binding site.

Belongs to the Glu/Leu/Phe/Val dehydrogenases family. Homohexamer.

The catalysed reaction is L-glutamate + NAD(+) + H2O = 2-oxoglutarate + NH4(+) + NADH + H(+). The protein operates within amino-acid degradation; L-glutamate degradation via hydroxyglutarate pathway; crotonoyl-CoA from L-glutamate: step 1/5. The sequence is that of NAD-specific glutamate dehydrogenase (gdh) from Clostridium symbiosum (Bacteroides symbiosus).